We begin with the raw amino-acid sequence, 383 residues long: MTAHAELSPTLQLACDLIRRPSVTPIDADCQKLMMQRLGDAGFKLEPMRIEDVDNFWASHGQHEGPVLCFAGHTDVVPTGPVQAWQNDPFDALIDEHGMLCGRGAADMKGSLAAMLVAAERFVTDYPDHKGSVAFLITSDEEGPAHHGTKAVVERLAARKERLDWCIVGEPSSTSLVGDVVKNGRRGSLGAKLTVRGVQGHVAYPHLAKNPIHLAAPALAELAAEHWDDGNAFFPPTSFQISNLNSGTGATNVIPGDLVAVFNFRFSTESTVEGLQQRVAAILDKHGLDWHVEWALSGLPFLTEPGALLDAVSASIKQVTGRDTKASTSGGTSDGRFIATLGTQVVELGPVNATIHQVNERVLASDLDVLTEIYYQTLIKLLA.

Zn(2+) is bound at residue His73. The active site involves Asp75. Residue Asp107 coordinates Zn(2+). Catalysis depends on Glu141, which acts as the Proton acceptor. The Zn(2+) site is built by Glu142, Glu170, and His356.

This sequence belongs to the peptidase M20A family. DapE subfamily. In terms of assembly, homodimer. It depends on Zn(2+) as a cofactor. The cofactor is Co(2+).

The enzyme catalyses N-succinyl-(2S,6S)-2,6-diaminopimelate + H2O = (2S,6S)-2,6-diaminopimelate + succinate. The protein operates within amino-acid biosynthesis; L-lysine biosynthesis via DAP pathway; LL-2,6-diaminopimelate from (S)-tetrahydrodipicolinate (succinylase route): step 3/3. Functionally, catalyzes the hydrolysis of N-succinyl-L,L-diaminopimelic acid (SDAP), forming succinate and LL-2,6-diaminopimelate (DAP), an intermediate involved in the bacterial biosynthesis of lysine and meso-diaminopimelic acid, an essential component of bacterial cell walls. The polypeptide is Succinyl-diaminopimelate desuccinylase (Pseudomonas fluorescens (strain ATCC BAA-477 / NRRL B-23932 / Pf-5)).